The following is an 875-amino-acid chain: MSNDKYIHTDVEDKIYSYWEKNNLFKPTKNKKQFSVVIPPPNVTGSLHMGHALNNSIQDLLVRYHRMNNYETLWQPGTDHAGIATQALVEKKLTADGIDKNEIGREKFIEKVWEWKEEHGDIILNQLKKLGCSCDWSRNAFTMDENLSKSVLKVFVELHKKGLIYKDKKLVNWDTVLKTAISDLEVDQREVNSKIYYIQYPIEASSDFITIATTRPETMLGDTAIAVNPKDDRFKHLVGKFVTVPIVGKKIKIIEDEYADPEMGTGALKITPAHDFNDYEVGQRNNLEIINIFTEGGKVNENAPKEYIGLDRFEARKRIIKELKEKEFFVKEENIKNKVPYGDRSNSIIEPFLTEQWFVDAKKLSIKAKDIVNSKKTNFFPANWSKTYFQWMNNIEPWCISRQLWWGHQIPAWYGPDKKIFVAINEEEAKLDAKKFYNKDVDLIRDPDVLDTWFSSGLWPFATLGWPDNKEYVDKFYPTSVLVTGFDIIFFWVARMIMFGMEFLDKEPFKDVYVHALVKDEKGQKMSKSKGNVINPLDLIEKYSADALRFTLLSMASPGTDVKLSEDRVKGYRNFLNKLWNANNFLITNNCDFSKIDEKPILSININKWIYAELIETKNKIEKNLKDYRFDEAAKNAYQFTWHSYCDWYLELSKTILFSEDEKAKDEVRQVSAYVFKQILILLHPFIPFVTEEIWLNNKFDNTGKDFLMLANWPSGEFERDTSINQVEKIISIVSELRSFKNELSVSPGSFIDISIETVSKKEQSFFTENEIILKKLGRIKNLYNKDLDKPTATLMVSGDLFKVYFDEDVDLELIKKNLTTRQNKYQEEMNKISQRLANKGFVDRAPKDIVDQEKTNYNNLKNDVERISITIKGL.

The 'HIGH' region signature appears at 41-51 (PNVTGSLHMGH). Residues 525–529 (KMSKS) carry the 'KMSKS' region motif. An ATP-binding site is contributed by lysine 528. Residues 810–875 (VDLELIKKNL…ERISITIKGL (66 aa)) are a coiled coil.

The protein belongs to the class-I aminoacyl-tRNA synthetase family. ValS type 1 subfamily. Monomer.

It localises to the cytoplasm. The enzyme catalyses tRNA(Val) + L-valine + ATP = L-valyl-tRNA(Val) + AMP + diphosphate. Functionally, catalyzes the attachment of valine to tRNA(Val). As ValRS can inadvertently accommodate and process structurally similar amino acids such as threonine, to avoid such errors, it has a 'posttransfer' editing activity that hydrolyzes mischarged Thr-tRNA(Val) in a tRNA-dependent manner. The sequence is that of Valine--tRNA ligase from Pelagibacter ubique (strain HTCC1062).